The sequence spans 403 residues: Shaggy-related protein kinase GSK4 (403 aa).

The Protein kinase domain maps to 71-355 (YMAERVVGTG…ALEACAHSFF (285 aa)). Residues 77–85 (VGTGSFGVV) and Lys-100 each bind ATP. Asp-196 (proton acceptor) is an active-site residue.

It belongs to the protein kinase superfamily. CMGC Ser/Thr protein kinase family. GSK-3 subfamily. Interacts with LIC.

It catalyses the reaction L-seryl-[protein] + ATP = O-phospho-L-seryl-[protein] + ADP + H(+). The catalysed reaction is L-threonyl-[protein] + ATP = O-phospho-L-threonyl-[protein] + ADP + H(+). In terms of biological role, probable serine-threonine kinase that may regulate brassinosteroid signaling. The sequence is that of Shaggy-related protein kinase GSK4 from Oryza sativa subsp. japonica (Rice).